Consider the following 51-residue polypeptide: MSWLNFLKYIAKYGKKAVSAAWKYKGKVLEWLNVGPTLEWVWQKLKKIAGL.

M1 carries the N-formylmethionine modification.

It localises to the secreted. Antibacterial peptide active against a broad range of lactic acid bacteria, L.monocytogenes and many epidemiologically unrelated strains of S.aureus involved in bovine mastitis. This chain is Bacteriocin aureocin A53 (aucA), found in Staphylococcus aureus.